We begin with the raw amino-acid sequence, 750 residues long: (13E)-labda-7,13-dien-15-ol synthase (750 aa).

The Mg(2+) site is built by Asp284, Asp286, Asp501, Asp505, Asn647, Thr651, and Glu655. Residues Asp284–Asp287 carry the DXDD motif motif. The DDXXD motif signature appears at Asp501–Asp505.

The protein belongs to the terpene synthase family. The cofactor is Mg(2+).

The catalysed reaction is geranylgeranyl diphosphate + H2O = (13E)-labda-7,13-dien-15-ol + diphosphate. It participates in secondary metabolite biosynthesis; terpenoid biosynthesis. Its function is as follows. Bifunctional diterpene synthase that directly generates the endocyclic double bond, as well as the hydroxyl group: produces an endocyclic double bond isomer of copalyl diphosphate (CPP), and carries out subsequent replacement of the diphosphate by a hydroxyl group to form (13E)-labda-7,13-dien-15-ol. The polypeptide is (13E)-labda-7,13-dien-15-ol synthase (Selaginella moellendorffii (Spikemoss)).